The following is a 144-amino-acid chain: 3-dehydroquinate dehydratase (144 aa).

The Proton acceptor role is filled by Tyr-22. Asn-73, His-79, and Asp-86 together coordinate substrate. The Proton donor role is filled by His-99. Substrate-binding positions include 100–101 (LS) and Arg-110.

This sequence belongs to the type-II 3-dehydroquinase family. In terms of assembly, homododecamer.

It carries out the reaction 3-dehydroquinate = 3-dehydroshikimate + H2O. It functions in the pathway metabolic intermediate biosynthesis; chorismate biosynthesis; chorismate from D-erythrose 4-phosphate and phosphoenolpyruvate: step 3/7. In terms of biological role, catalyzes a trans-dehydration via an enolate intermediate. The sequence is that of 3-dehydroquinate dehydratase from Trichlorobacter lovleyi (strain ATCC BAA-1151 / DSM 17278 / SZ) (Geobacter lovleyi).